Here is a 99-residue protein sequence, read N- to C-terminus: Mitochondrial import receptor subunit TOM9-2 (99 aa).

Topologically, residues 2 to 51 are cytoplasmic; sequence AAKRIGAGKSGGGDPNILARISNSEIVSQGRRAAGDAVEVSKKLLRSTGK. A helical membrane pass occupies residues 52 to 69; it reads AAWIAGTTFLILVVPLII. Topologically, residues 70-99 are mitochondrial intermembrane; the sequence is EMDREAQINEIELQQASLLGAPPSPMQRGL.

Belongs to the Tom22 family. As to quaternary structure, forms part of the preprotein translocase complex of the outer mitochondrial membrane (TOM complex) which consists of at least 6 different proteins (TOM5, TOM6, TOM7, TOM20, TOM22/TOM9 and TOM40). As to expression, expressed in young cotyledons, roots, flowers and leaves.

The protein resides in the mitochondrion outer membrane. Central component of the receptor complex responsible for the recognition and translocation of cytosolically synthesized mitochondrial preproteins. Together with TOM20 functions as the transit peptide receptor at the surface of the mitochondrion outer membrane and facilitates the movement of preproteins into the translocation pore. The protein is Mitochondrial import receptor subunit TOM9-2 (TOM9-2) of Arabidopsis thaliana (Mouse-ear cress).